Here is a 694-residue protein sequence, read N- to C-terminus: Phosphatase and actin regulator 4 (694 aa).

2 disordered regions span residues 1-354 (MEDP…SPLV) and 375-405 (QDISQQEDQKTEVPKKIQDQSFGESHIPSRL). The segment covering 45-54 (KPWKWRKKKS) has biased composition (basic residues). Basic and acidic residues predominate over residues 55–84 (SDKFKETSEVLERKISMRKPREELVKRGVL). One copy of the RPEL 1 repeat lies at 63-88 (EVLERKISMRKPREELVKRGVLLEDP). Residues Ser116, Ser118, Ser129, and Ser145 each carry the phosphoserine modification. Low complexity-rich tracts occupy residues 184-209 (AGSTARSVSSTSGSTTVTSAATTAAT) and 231-249 (TLPAAPASANTAATTTAPA). Over residues 250-259 (KQPPIPPPKP) the composition is skewed to pro residues. 4 positions are modified to phosphoserine: Ser264, Ser285, Ser335, and Ser337. Residues 329-352 (LIIPPSSPSPPLPTHIPPEPPRSP) are compositionally biased toward pro residues. The span at 381–392 (EDQKTEVPKKIQ) shows a compositional bias: basic and acidic residues. Ser420 bears the Phosphoserine mark. Thr425 carries the phosphothreonine modification. 7 positions are modified to phosphoserine: Ser436, Ser446, Ser457, Ser503, Ser505, Ser549, and Ser582. The segment at 467–562 (VPDDEEEEQT…TNLNSWPRKS (96 aa)) is disordered. Residues 546-559 (SRPSEPETNLNSWP) show a composition bias toward polar residues. RPEL repeat units lie at residues 575 to 600 (NTLIRRLSQRPTAEELEQRNILQPKN) and 613 to 638 (RRLTRKLSQRPTVAELLARKILRFNE). Residues 589 to 608 (ELEQRNILQPKNEADRQAEK) are disordered. Phosphoserine is present on Ser620.

This sequence belongs to the phosphatase and actin regulator family. Binds PPP1CA and actin.

Its subcellular location is the cytoplasm. The protein localises to the cell projection. It localises to the lamellipodium. In terms of biological role, regulator of protein phosphatase 1 (PP1) required for neural tube and optic fissure closure, and enteric neural crest cell (ENCCs) migration during development. Acts as an activator of PP1 by interacting with PPP1CA and preventing phosphorylation of PPP1CA at 'Thr-320'. During neural tube closure, localizes to the ventral neural tube and activates PP1, leading to down-regulate cell proliferation within cranial neural tissue and the neural retina. Also acts as a regulator of migration of enteric neural crest cells (ENCCs) by activating PP1, leading to dephosphorylation and subsequent activation of cofilin (COF1 or COF2) and repression of the integrin signaling through the RHO/ROCK pathway. This is Phosphatase and actin regulator 4 (Phactr4) from Mus musculus (Mouse).